Consider the following 513-residue polypeptide: PPE family protein PPE4 (513 aa).

Transmembrane regions (helical) follow at residues 233 to 253, 277 to 297, and 309 to 329; these read IIIA…PLLF, FLLP…PIVL, and LAAA…AVTG. 2 disordered regions span residues 395 to 446 and 469 to 513; these read AAAA…ERGA and LAGD…HDSK.

Belongs to the mycobacterial PPE family.

The protein localises to the cell membrane. Functionally, important for the siderophore-mediated iron-acquisition function of ESX-3. In Mycobacterium tuberculosis (strain CDC 1551 / Oshkosh), this protein is PPE family protein PPE4 (PPE4).